A 298-amino-acid chain; its full sequence is Probable mitochondrial 2-oxodicarboxylate carrier (298 aa).

Transmembrane regions (helical) follow at residues 6-26 (IPFP…VLTL), 62-81 (HRLY…KRAL), 105-125 (ALSI…VVPF), 159-179 (ALYN…AGYF), 203-223 (LIAG…FDVI), and 267-287 (VLRL…VIEF). Solcar repeat units follow at residues 6–92 (IPFP…YSKL), 102–188 (SSPA…IRNS), and 197–287 (GEIR…VIEF).

This sequence belongs to the mitochondrial carrier (TC 2.A.29) family.

The protein localises to the mitochondrion inner membrane. Transports C5-C7 oxodicarboxylates across the inner membranes of mitochondria. This chain is Probable mitochondrial 2-oxodicarboxylate carrier, found in Schizosaccharomyces pombe (strain 972 / ATCC 24843) (Fission yeast).